The sequence spans 462 residues: MERYGRPGEEGSRSDPSLEWTSHGGETAVEAPMWRLGLSGGGGGGGGGESYPERPDEPDCIYYLRTGVCGYGSRCRFNHPRDRGAVIGGVRGEAGALPERMGHPVCQHFMRTGTCKFGASCKYHHPRQGGGGGSVAPVSLSYLGYPLRPGEKECSYYLRTGQCKFGLTCRFNHPVPLAVQGPPQQPQQQQPQPQPQLQTIYPTLQSQSIPSSQQYGLVLTRPSFLTGSYLQSPYGPPMVLPPGMVPYSGWNPYQASLSAMPSPGTQPSIGSSSIYGLTPLSPSATAYTGTYQSVPSSNSTSKEFPQRPDQPECQYFMRTGDCKFGSSCRYHHPVDAVPPKTGIVLSSIGLPLRPGVAQCTHFAQHGICKFGPACKFDHSMSSSLSYSPSASSLTDMPVAPYPIGSSSLSGSSAPVSSSNEPTKEAVTPAVSSMVSGLSRPEPAETSGDSASVSGSIEAKTSS.

Residues 1-13 (MERYGRPGEEGSR) are compositionally biased toward basic and acidic residues. The tract at residues 1–26 (MERYGRPGEEGSRSDPSLEWTSHGGE) is disordered. C3H1-type zinc fingers lie at residues 54–82 (RPDEPDCIYYLRTGVCGYGSRCRFNHPRD), 100–128 (RMGHPVCQHFMRTGTCKFGASCKYHHPRQ), and 148–176 (RPGEKECSYYLRTGQCKFGLTCRFNHPVP). The span at 288 to 303 (TGTYQSVPSSNSTSKE) shows a compositional bias: polar residues. The tract at residues 288–310 (TGTYQSVPSSNSTSKEFPQRPDQ) is disordered. 2 consecutive C3H1-type zinc fingers follow at residues 307–335 (RPDQPECQYFMRTGDCKFGSSCRYHHPVD) and 353–381 (RPGVAQCTHFAQHGICKFGPACKFDHSMS). Positions 405–418 (SSSLSGSSAPVSSS) are enriched in low complexity. The segment at 405–462 (SSSLSGSSAPVSSSNEPTKEAVTPAVSSMVSGLSRPEPAETSGDSASVSGSIEAKTSS) is disordered. Residues 446-462 (SGDSASVSGSIEAKTSS) show a composition bias toward polar residues.

Its subcellular location is the nucleus. The sequence is that of Zinc finger CCCH domain-containing protein 34 from Arabidopsis thaliana (Mouse-ear cress).